The following is a 174-amino-acid chain: CDP-archaeol synthase (174 aa).

The next 5 helical transmembrane spans lie at isoleucine 14–alanine 34, isoleucine 59–alanine 79, methionine 83–glycine 103, alanine 118–glycine 138, and alanine 149–leucine 169.

This sequence belongs to the CDP-archaeol synthase family. Mg(2+) is required as a cofactor.

The protein resides in the cell membrane. The catalysed reaction is 2,3-bis-O-(geranylgeranyl)-sn-glycerol 1-phosphate + CTP + H(+) = CDP-2,3-bis-O-(geranylgeranyl)-sn-glycerol + diphosphate. Its pathway is membrane lipid metabolism; glycerophospholipid metabolism. In terms of biological role, catalyzes the formation of CDP-2,3-bis-(O-geranylgeranyl)-sn-glycerol (CDP-archaeol) from 2,3-bis-(O-geranylgeranyl)-sn-glycerol 1-phosphate (DGGGP) and CTP. This reaction is the third ether-bond-formation step in the biosynthesis of archaeal membrane lipids. The sequence is that of CDP-archaeol synthase from Aeropyrum pernix (strain ATCC 700893 / DSM 11879 / JCM 9820 / NBRC 100138 / K1).